A 277-amino-acid polypeptide reads, in one-letter code: Orotidine 5'-phosphate decarboxylase (277 aa).

Residues Asp40, 62–64, 93–102, Tyr229, and Arg247 contribute to the substrate site; these read KTH and DRKFIDIGNT. The active-site Proton donor is Lys95.

The protein belongs to the OMP decarboxylase family.

It carries out the reaction orotidine 5'-phosphate + H(+) = UMP + CO2. It functions in the pathway pyrimidine metabolism; UMP biosynthesis via de novo pathway; UMP from orotate: step 2/2. This Aspergillus awamori (Black koji mold) protein is Orotidine 5'-phosphate decarboxylase (pyrG).